The sequence spans 206 residues: 7-methyl-GTP pyrophosphatase (206 aa).

Catalysis depends on D82, which acts as the Proton acceptor.

Belongs to the Maf family. YceF subfamily. A divalent metal cation serves as cofactor.

It is found in the cytoplasm. It carries out the reaction N(7)-methyl-GTP + H2O = N(7)-methyl-GMP + diphosphate + H(+). In terms of biological role, nucleoside triphosphate pyrophosphatase that hydrolyzes 7-methyl-GTP (m(7)GTP). May have a dual role in cell division arrest and in preventing the incorporation of modified nucleotides into cellular nucleic acids. This is 7-methyl-GTP pyrophosphatase from Shewanella denitrificans (strain OS217 / ATCC BAA-1090 / DSM 15013).